We begin with the raw amino-acid sequence, 212 residues long: Large ribosomal subunit protein uL3 (212 aa).

Positions R134–P155 are disordered. N5-methylglutamine is present on Q153.

The protein belongs to the universal ribosomal protein uL3 family. Part of the 50S ribosomal subunit. Forms a cluster with proteins L14 and L19. Post-translationally, methylated by PrmB.

In terms of biological role, one of the primary rRNA binding proteins, it binds directly near the 3'-end of the 23S rRNA, where it nucleates assembly of the 50S subunit. The sequence is that of Large ribosomal subunit protein uL3 from Pseudoalteromonas atlantica (strain T6c / ATCC BAA-1087).